Consider the following 121-residue polypeptide: MKKQYRIKQNEEFQYTFKKGHSFANRQLVIYYREKEDQCHFRIGLSVGKKIGNAVMRNRIKRCLRQSFHELEPDIKPAYDIVIIARNPTRNMNCGEIKKSLSHLLYKEGLLKNTRNKTSLR.

Belongs to the RnpA family. In terms of assembly, consists of a catalytic RNA component (M1 or rnpB) and a protein subunit.

It catalyses the reaction Endonucleolytic cleavage of RNA, removing 5'-extranucleotides from tRNA precursor.. In terms of biological role, RNaseP catalyzes the removal of the 5'-leader sequence from pre-tRNA to produce the mature 5'-terminus. It can also cleave other RNA substrates such as 4.5S RNA. The protein component plays an auxiliary but essential role in vivo by binding to the 5'-leader sequence and broadening the substrate specificity of the ribozyme. The chain is Ribonuclease P protein component from Oceanobacillus iheyensis (strain DSM 14371 / CIP 107618 / JCM 11309 / KCTC 3954 / HTE831).